The sequence spans 217 residues: Peptide methionine sulfoxide reductase MsrA (217 aa).

Residue Cys-56 is part of the active site.

It belongs to the MsrA Met sulfoxide reductase family.

It carries out the reaction L-methionyl-[protein] + [thioredoxin]-disulfide + H2O = L-methionyl-(S)-S-oxide-[protein] + [thioredoxin]-dithiol. The enzyme catalyses [thioredoxin]-disulfide + L-methionine + H2O = L-methionine (S)-S-oxide + [thioredoxin]-dithiol. Functionally, has an important function as a repair enzyme for proteins that have been inactivated by oxidation. Catalyzes the reversible oxidation-reduction of methionine sulfoxide in proteins to methionine. This Rippkaea orientalis (strain PCC 8801 / RF-1) (Cyanothece sp. (strain PCC 8801)) protein is Peptide methionine sulfoxide reductase MsrA.